The following is a 432-amino-acid chain: D-amino acid dehydrogenase (432 aa).

An FAD-binding site is contributed by 3 to 17; sequence VVILGSGVVGVTSAW.

It belongs to the DadA oxidoreductase family. The cofactor is FAD.

The catalysed reaction is a D-alpha-amino acid + A + H2O = a 2-oxocarboxylate + AH2 + NH4(+). It functions in the pathway amino-acid degradation; D-alanine degradation; NH(3) and pyruvate from D-alanine: step 1/1. Functionally, oxidative deamination of D-amino acids. In Citrobacter koseri (strain ATCC BAA-895 / CDC 4225-83 / SGSC4696), this protein is D-amino acid dehydrogenase.